Consider the following 198-residue polypeptide: Large ribosomal subunit protein bL25 (198 aa).

The protein belongs to the bacterial ribosomal protein bL25 family. CTC subfamily. Part of the 50S ribosomal subunit; part of the 5S rRNA/L5/L18/L25 subcomplex. Contacts the 5S rRNA. Binds to the 5S rRNA independently of L5 and L18.

In terms of biological role, this is one of the proteins that binds to the 5S RNA in the ribosome where it forms part of the central protuberance. The chain is Large ribosomal subunit protein bL25 from Phocaeicola vulgatus (strain ATCC 8482 / DSM 1447 / JCM 5826 / CCUG 4940 / NBRC 14291 / NCTC 11154) (Bacteroides vulgatus).